The following is a 556-amino-acid chain: Glutamine--tRNA ligase (556 aa).

The short motif at 35 to 45 (PEPNGYLHIGH) is the 'HIGH' region element. ATP is bound by residues 36–38 (EPN) and 42–48 (HIGHAKS). 2 residues coordinate L-glutamine: Asp-68 and Tyr-213. ATP contacts are provided by residues Thr-232 and 262–263 (RL). The short motif at 269-273 (VTSKR) is the 'KMSKS' region element.

It belongs to the class-I aminoacyl-tRNA synthetase family. As to quaternary structure, monomer.

It localises to the cytoplasm. It carries out the reaction tRNA(Gln) + L-glutamine + ATP = L-glutaminyl-tRNA(Gln) + AMP + diphosphate. This is Glutamine--tRNA ligase from Pseudomonas aeruginosa (strain LESB58).